A 650-amino-acid chain; its full sequence is Chaperone protein DnaK (650 aa).

Residue Thr-200 is modified to Phosphothreonine; by autocatalysis. Positions 613 to 634 (QAGAAGAAGAAAAEGAAQGGAQ) are enriched in low complexity. Residues 613–637 (QAGAAGAAGAAAAEGAAQGGAQTAD) are disordered.

The protein belongs to the heat shock protein 70 family.

Acts as a chaperone. This is Chaperone protein DnaK from Burkholderia thailandensis (strain ATCC 700388 / DSM 13276 / CCUG 48851 / CIP 106301 / E264).